A 78-amino-acid polypeptide reads, in one-letter code: MPKRILQGTVVSDKNDKTVVVKVERRFAHPILQKTVRRSKKYKAHDENNQYKVGDVVSIEECAPISKDKRWTVIAAQA.

Belongs to the universal ribosomal protein uS17 family. As to quaternary structure, part of the 30S ribosomal subunit.

One of the primary rRNA binding proteins, it binds specifically to the 5'-end of 16S ribosomal RNA. The polypeptide is Small ribosomal subunit protein uS17 (Sinorhizobium fredii (strain NBRC 101917 / NGR234)).